We begin with the raw amino-acid sequence, 98 residues long: Defensin-B (98 aa).

The N-terminal stretch at 1 to 20 is a signal peptide; the sequence is MKSITVICFLALCTVAITSA. Residues 21 to 58 constitute a propeptide that is removed on maturation; the sequence is YPQEPVLADEARPFANSLFDELPEETYQAAVENFRLKR. Cystine bridges form between Cys61–Cys88, Cys74–Cys94, and Cys78–Cys96.

It belongs to the invertebrate defensin family. Type 1 subfamily.

The protein localises to the secreted. Antibacterial peptide mostly active against Gram-positive bacteria. This chain is Defensin-B (DEFB), found in Aedes aegypti (Yellowfever mosquito).